The following is a 936-amino-acid chain: F-box protein dre-1 (936 aa).

The interval 1–67 (MSSSSSPFFH…GSSEADNPTL (67 aa)) is disordered. The span at 22-36 (QQSPSYSQNSNSPSQ) shows a compositional bias: low complexity. Residues 48-63 (GSTSMRYSPSGSSEAD) are compositionally biased toward polar residues. The F-box domain maps to 159 to 205 (QDHINRLPEELLLKVFSFLPDKSLLACSSVSYRFNQISNSHEVWKEL). 18 PbH1 repeats span residues 405–427 (SAAP…YITD), 428–450 (NATG…WVKN), 451–473 (HANP…FTFE), 474–496 (HGQG…EVKN), 497–519 (SANP…YVHE), 520–542 (RGRG…WITS), 543–565 (HSDP…YIFG), 566–588 (EGRG…QIRS), 589–611 (QSDP…YVHE), 612–634 (KGRG…WVTT), 635–657 (GSSP…YFYD), 658–680 (QGHG…QIRT), 681–703 (GSNP…LVYN), 704–726 (GGKG…WIKT), 727–749 (DSEP…CIFN), 750–772 (RGKG…LIST), 773–795 (ESNP…EITN), and 796–818 (GATA…CVAT). A UBR-type zinc finger spans residues 843 to 914 (GLCLFKVSSN…LERHCHLQNV (72 aa)).

As to quaternary structure, component of a SCF ubiquitin ligase complex. Interacts (via F-box) with skr-1. Interacts with blmp-1; the interaction targets blmp-1 for proteasomal degradation. Interacts with ced-9; the interaction inhibits ced-9 activity, either directly or indirectly. In terms of tissue distribution, in mid-embryogenesis, expression is most prominent in epidermal and intestinal cells. By the 1.5-fold stage of embryogenesis, expression is additionally detected in neurons and other cells. During larval and adult stages, highest expression is seen in epidermal seam cells and hypodermis. In larvae, strongly expressed in the P epidermal blast cells and descendents that give rise to the vulva and weakly expressed in the somatic gonad, including the gonadoblasts, the anchor cell and the distal tip cells. Some weak expression also seen in adult spermatheca and uterus. In the musculature, expressed in the pharynx, anal depressor, sex muscles, and body wall muscles. Detected in neurons of the head, tail, ventral cord and periphery. Also expressed in the embryonic tail spike cell.

The protein localises to the nucleus. The protein resides in the cytoplasm. The protein operates within protein modification; protein ubiquitination. Its function is as follows. Substrate recognition component of a SCF (SKP1-CUL1-F-box protein) E3 ubiquitin-protein ligase complex which mediates the ubiquitination and subsequent proteasomal degradation of target proteins including blmp-1. Promotes ubiquitination of snail family proteins ces-1, scrt-1 and snai-1. Heterochronic protein which is required for the timing of gonad development and epidermal seam cell differentiation. Regulates tail-spike cell death through inhibition of the apoptosis regulator ced-9. In Caenorhabditis elegans, this protein is F-box protein dre-1.